We begin with the raw amino-acid sequence, 823 residues long: MGFGSDLKNSQEAVLKLQDWELRLLETVKKFMALRIKSDKEYAYTLQNLCNQVDKDSTVQVNYVSNVSKSWLLMIQQTEQLSRIMKTHAEDLNSGPLHRLTMMIKDKQQVKKSYVGIHQQIEAEMIKVTKTELEKLKSSYRQLIKEMNSAKEKYKEALAKGKETEKAKERCDKATMKLHMLHNQYVLALKGAQLHQSQYYDTTLPLLLDSVQKMQEEMIKALKGIFDEYSEITSLVTEEIVNVHKEIQMSVDQIDPSTEYNDFIDVHRTTAAKEQEIEFDTSLLEENENLQANEIMWNNLTADSLQVMLKTLAEELTQTQQMLLHKEAAVLELEKRIEESSETCAKKSDIVLLLGQKQALEELKQSVQQLRCTEAKCAAQKELLEQKVQENDGKEPPPVVNYEEDARSVTSMERKERLSKFESIRHSIAGIIKSPKSVLGSSTQLSDVISVGEKPLAEHDWYHGAIPRIEAQELLKQQGDFLVRESHGKPGEYVLSVYSDGQRRHFIIQFVDNLYRFEGTGFSNIPQLIDHHFNTKQVITKKSGVVLLNPIPKDKKWVLNHEDVSLGELLGKGNFGEVYKGTLKDKTPVAVKTCKEDLPQELKIKFLQEAKILKQYDHPNIVKLIGVCTQRQPVYIIMELVPGGDFLSFLRKRKDELKLKQLVRFSLDVAAGMLYLEGKNCIHRDLAARNCLVGENNTLKISDFGMSRQEDGGVYSSSGLKQIPIKWTAPEALNYGRYSSESDVWSFGILLWETFSLGVCPYPGMTNQQAREQVERGYRMSAPQNCPEEIFTIMMKCWDYKPENRPKFSDLHKELTAIKKKIT.

Positions 1–259 constitute an F-BAR domain; it reads MGFGSDLKNS…SVDQIDPSTE (259 aa). The important for interaction with membranes containing phosphoinositides stretch occupies residues 1–300; it reads MGFGSDLKNS…QANEIMWNNL (300 aa). 2 coiled-coil regions span residues 123-185 and 301-382; these read AEMI…HNQY and TADS…AQKE. Residue Tyr402 is modified to Phosphotyrosine. At Ser434 the chain carries Phosphoserine. One can recognise an SH2 domain in the interval 461–551; it reads WYHGAIPRIE…KSGVVLLNPI (91 aa). In terms of domain architecture, Protein kinase spans 564 to 815; it reads VSLGELLGKG…PKFSDLHKEL (252 aa). Residues 570–578 and Lys592 each bind ATP; that span reads LGKGNFGEV. Phosphotyrosine; by autocatalysis is present on Tyr616. The active-site Proton acceptor is the Asp685. Tyr715 carries the post-translational modification Phosphotyrosine; by autocatalysis.

It belongs to the protein kinase superfamily. Tyr protein kinase family. Fes/fps subfamily. Homotrimer. Interacts with IRS1, JAK1, NRP1, PIK3R1, PLEC and TMF1. Interacts with PPP1CA and regulates its phosphorylation at 'Thr-320'. Interacts with CTNND1, EGFR, FLT3, PECAM1, PDGFR and STAT3. Interacts (via SH2 domain) with CTTN. Interacts with HSP90; this stabilizes phosphorylated FER and protects FER against proteasomal degradation. Component of a complex that contains at least FER, CTTN and PTK2/FAK1. Interacts with ARHGDIA. Autophosphorylated. In terms of processing, polyubiquitinated; this leads to proteasomal degradation.

It is found in the cytoplasm. The protein resides in the cytoskeleton. The protein localises to the cell membrane. It localises to the cell projection. Its subcellular location is the cell junction. It is found in the membrane. The protein resides in the nucleus. The protein localises to the cell cortex. It carries out the reaction L-tyrosyl-[protein] + ATP = O-phospho-L-tyrosyl-[protein] + ADP + H(+). Functionally, tyrosine-protein kinase that acts downstream of cell surface receptors for growth factors and plays a role in the regulation of the actin cytoskeleton, microtubule assembly, lamellipodia formation, cell adhesion, cell migration and chemotaxis. Acts downstream of EGFR, KIT, PDGFRA and PDGFRB. Acts downstream of EGFR to promote activation of NF-kappa-B and cell proliferation. May play a role in the regulation of the mitotic cell cycle. Plays a role in the insulin receptor signaling pathway and in activation of phosphatidylinositol 3-kinase. Acts downstream of the activated FCER1 receptor and plays a role in FCER1 (high affinity immunoglobulin epsilon receptor)-mediated signaling in mast cells. Plays a role in the regulation of mast cell degranulation. Plays a role in leukocyte recruitment and diapedesis in response to bacterial lipopolysaccharide (LPS). Plays a role in neuronal cell death after brain damage. Phosphorylates CTTN, CTNND1, PTK2/FAK1, GAB1, PECAM1 and PTPN11. May phosphorylate JUP and PTPN1. Can phosphorylate STAT3, but the biological relevance of this clearly depends on cell type and stimulus. Plays a role in synapse organization, trafficking of synaptic vesicles, the generation of excitatory postsynaptic currents and neuron-neuron synaptic transmission. The polypeptide is Tyrosine-protein kinase Fer (Fer) (Rattus norvegicus (Rat)).